The sequence spans 467 residues: FK506-binding protein 4 (467 aa).

Disordered regions lie at residues 64–163 (KATG…GDDD) and 208–357 (GNFV…KPTS). Composition is skewed to acidic residues over residues 71–80 (DDDDEEEDEY), 147–163 (SDEE…GDDD), and 213–254 (PEDD…DELD). Basic and acidic residues-rich tracts occupy residues 271–287 (APKL…RPAE) and 312–332 (QKVE…DKKV). The region spanning 381–467 (GDRVGMRYIG…IFDVKLLEIK (87 aa)) is the PPIase FKBP-type domain.

It belongs to the FKBP-type PPIase family. FKBP3/4 subfamily. Binds to histones H3 and H4.

Its subcellular location is the nucleus. It carries out the reaction [protein]-peptidylproline (omega=180) = [protein]-peptidylproline (omega=0). Inhibited by both FK506 and rapamycin. PPIase that acts as a histone chaperone. Histone proline isomerase that increases the rate of cis-trans isomerization at prolines on the histone H3 N-terminal tail. Proline isomerization influences H3 methylation thereby regulating gene expression. This chain is FK506-binding protein 4 (fkr-4), found in Neurospora crassa (strain ATCC 24698 / 74-OR23-1A / CBS 708.71 / DSM 1257 / FGSC 987).